A 344-amino-acid chain; its full sequence is Dihydroorotate dehydrogenase (quinone) (344 aa).

FMN is bound by residues 65–69 and Thr89; that span reads AGFDK. Lys69 is a binding site for substrate. 114–118 provides a ligand contact to substrate; the sequence is NRMGF. FMN is bound by residues Asn145 and Asn178. Substrate is bound at residue Asn178. Ser181 functions as the Nucleophile in the catalytic mechanism. Asn183 is a binding site for substrate. Residues Lys215 and Thr243 each contribute to the FMN site. 244–245 contacts substrate; that stretch reads NT. Residues Gly269, Gly298, and 319 to 320 each bind FMN; that span reads YT.

It belongs to the dihydroorotate dehydrogenase family. Type 2 subfamily. Monomer. FMN is required as a cofactor.

It localises to the cell membrane. It catalyses the reaction (S)-dihydroorotate + a quinone = orotate + a quinol. It participates in pyrimidine metabolism; UMP biosynthesis via de novo pathway; orotate from (S)-dihydroorotate (quinone route): step 1/1. Functionally, catalyzes the conversion of dihydroorotate to orotate with quinone as electron acceptor. This Clavibacter sepedonicus (Clavibacter michiganensis subsp. sepedonicus) protein is Dihydroorotate dehydrogenase (quinone).